We begin with the raw amino-acid sequence, 129 residues long: Large ribosomal subunit protein bL17 (129 aa).

The protein belongs to the bacterial ribosomal protein bL17 family. As to quaternary structure, part of the 50S ribosomal subunit. Contacts protein L32.

This Yersinia pseudotuberculosis serotype O:1b (strain IP 31758) protein is Large ribosomal subunit protein bL17.